The sequence spans 1100 residues: Formin-like protein 1 (1100 aa).

Residues 1-13 show a composition bias toward low complexity; the sequence is MGNAAGSAEQPAG. Disordered regions lie at residues 1–31, 167–200, 446–474, and 510–635; these read MGNAAGSAEQPAGPAAPPPKQPAPPKQPMPA, STDNGASNSEKNKPLEQSVEDLSKGPPSSVPKSR, RFSESTAMGPSRRPPEPEKAPPAAPTRPS, and TPSG…AKKP. The N-myristoyl glycine moiety is linked to residue glycine 2. Position 7 is a phosphoserine (serine 7). Over residues 14–28 the composition is skewed to pro residues; sequence PAAPPPKQPAPPKQP. The 442-residue stretch at 27 to 468 folds into the GBD/FH3 domain; it reads QPMPAAGELE…PPEPEKAPPA (442 aa). Phosphoserine is present on serine 184. Low complexity predominate over residues 517–538; that stretch reads PTPGVPTGSPSPDLAPAAEPAP. The segment covering 539 to 615 has biased composition (pro residues); that stretch reads GAAPPPPPPL…PPPPPPPGGP (77 aa). Phosphoserine occurs at positions 624 and 693. Residues 632–1023 enclose the FH2 domain; it reads AKKPIQTKFR…QEAGADTPGK (392 aa). The interval 1008-1037 is disordered; that stretch reads KKEAAAQEAGADTPGKGEPPAPKSPPKARR. The segment covering 1013–1023 has biased composition (low complexity); that stretch reads AQEAGADTPGK. A Phosphoserine modification is found at serine 1031. Positions 1059–1090 constitute a DAD domain; it reads SDRDGAIEDIITVIKTVPFTARTGKRTSRLLC.

The protein belongs to the formin homology family. As to quaternary structure, interacts with RAC1, PFN1 and PFN2. Interacts (activated by RAC1) with SRGAP2 (via SH3 domain); regulates the actin filament severing activity of FMNL1. Myristoylation mediates membrane localization and blebbing. In terms of tissue distribution, expressed in heart, brain, placenta, lung, liver, skeletal muscle, kidney and pancreas.

The protein resides in the cytoplasm. It localises to the cell membrane. Its subcellular location is the cytoplasmic vesicle. The protein localises to the phagosome. It is found in the cell cortex. The protein resides in the cell projection. It localises to the bleb. May play a role in the control of cell motility and survival of macrophages. Plays a role in the regulation of cell morphology and cytoskeletal organization. Required in the cortical actin filament dynamics and cell shape. In Homo sapiens (Human), this protein is Formin-like protein 1 (FMNL1).